The sequence spans 464 residues: MALKIDFNNVFHPYLQKERLGEADIDGYKEKFTSALVSLREKKEKGELGFFHLPYLPEEEIAEIEKTAREVREKFKYFVVLGIGGSALGPLAVHTALNNLRYNELSEELRGGPKFYVEDNIDPERMASLLKVIEPEKTVFNVITKSGATAETLSQLLIVTEVLKKKVGKRFTEHLIFTTDPEKGSLRALARELGVKTFAIPPNVGGRFSELTPVGLLPAAVTGINIRELLAGAREMAERCERENLWENPAGLAAAIHVLLLERGKNMAVMMPYADSLKYMADWYAQLLGESIGKRLNRRGEEVFVGQTPVKALGVTDQHSQVQLYTEGPFDKLLIFLEVERYRNRVVIPPDFPQYAELKFLGGHTLNELIIAEKKATEFALLKARRPNYTVIFPEVNPYTVGELLYFLEAKIAFMGEYLDINAFDQPGVEEGKKATYALLGREGFEEKRQEVLKVKKEPRFILE.

The active-site Proton donor is Glu-290. Active-site residues include His-319 and Lys-433.

Belongs to the GPI family.

It localises to the cytoplasm. It carries out the reaction alpha-D-glucose 6-phosphate = beta-D-fructose 6-phosphate. It participates in carbohydrate biosynthesis; gluconeogenesis. The protein operates within carbohydrate degradation; glycolysis; D-glyceraldehyde 3-phosphate and glycerone phosphate from D-glucose: step 2/4. Catalyzes the reversible isomerization of glucose-6-phosphate to fructose-6-phosphate. This Carboxydothermus hydrogenoformans (strain ATCC BAA-161 / DSM 6008 / Z-2901) protein is Glucose-6-phosphate isomerase.